The sequence spans 276 residues: Small ribosomal subunit protein uS2 (276 aa).

This sequence belongs to the universal ribosomal protein uS2 family.

The sequence is that of Small ribosomal subunit protein uS2 from Chlamydia abortus (strain DSM 27085 / S26/3) (Chlamydophila abortus).